A 335-amino-acid chain; its full sequence is Cytoskeleton protein RodZ (335 aa).

Residues 1–111 (MNTEATHDQN…LGKRRKKRDG (111 aa)) are Cytoplasmic-facing. In terms of domain architecture, HTH cro/C1-type spans 19–71 (LRNAREQLGLSQQAVAERLCLKVSTVRDIEEDKAPADLASTFLRGYIRSYARL). Positions 30-49 (QQAVAERLCLKVSTVRDIEE) form a DNA-binding region, H-T-H motif. Residues 112–132 (WLMTFTWLVLFVVIGLSGAWW) form a helical; Signal-anchor for type II membrane protein membrane-spanning segment. The Periplasmic segment spans residues 133–335 (WQDHKAQQEE…TLNAEQSPAQ (203 aa)). The segment covering 148–164 (DQSSAELNNNQSQSVPL) has biased composition (polar residues). The disordered stretch occupies residues 148 to 244 (DQSSAELNNN…PLPTDQAGVT (97 aa)). Low complexity-rich tracts occupy residues 165–205 (DTST…DPQQ) and 217–239 (DTAA…LPTD).

Belongs to the RodZ family.

It is found in the cell inner membrane. Cytoskeletal protein that is involved in cell-shape control through regulation of the length of the long axis. In Escherichia coli O81 (strain ED1a), this protein is Cytoskeleton protein RodZ.